A 671-amino-acid chain; its full sequence is Oviduct-specific glycoprotein (671 aa).

The signal sequence occupies residues 1–21 (MGRLLLWVGLVLLMKPNDGTA). One can recognise a GH18 domain in the interval 22-385 (YKLVCYFTNW…HILNELLVRA (364 aa)). Residues C26 and C51 are joined by a disulfide bond. Residues 71-72 (LQ), 98-101 (GGWN), Y142, 211-214 (LSYD), and W355 contribute to the chitin site. The N-linked (GlcNAc...) asparagine glycan is linked to N402. Tandem repeats lie at residues 490-504 (TGMT…AGRE), 505-519 (TMTT…PGGE), 520-534 (TMTT…PGGE), 535-549 (TVTT…PGGE), 550-564 (TMTT…PGGE), 565-579 (TVTI…PVGE), 580-594 (TVTI…PGGQ), and 595-609 (TTAT…PPGM). The interval 490–609 (TGMTVTVQTQ…GSQSVTPPGM (120 aa)) is 8 X 15 AA tandem repeats. 6 N-linked (GlcNAc...) asparagine glycosylation sites follow: N511, N526, N541, N556, N571, and N586.

Belongs to the glycosyl hydrolase 18 family. Post-translationally, highly O-glycosylated and also N-glycosylated. As to expression, oviduct.

The protein localises to the cytoplasmic vesicle. It is found in the secretory vesicle. Its function is as follows. Binds to oocyte zona pellucida in vivo. May play a role in the fertilization process and/or early embryonic development. Might act as a protective secretion influencing the first steps of the reproductive process necessary for the normal triggering of fertilization and early embryonic development. This Mesocricetus auratus (Golden hamster) protein is Oviduct-specific glycoprotein (OVGP1).